Here is a 155-residue protein sequence, read N- to C-terminus: SsrA-binding protein (155 aa).

A disordered region spans residues 136–155 (REDLKRRQDQRDIQRAMKSY).

Belongs to the SmpB family.

It localises to the cytoplasm. Required for rescue of stalled ribosomes mediated by trans-translation. Binds to transfer-messenger RNA (tmRNA), required for stable association of tmRNA with ribosomes. tmRNA and SmpB together mimic tRNA shape, replacing the anticodon stem-loop with SmpB. tmRNA is encoded by the ssrA gene; the 2 termini fold to resemble tRNA(Ala) and it encodes a 'tag peptide', a short internal open reading frame. During trans-translation Ala-aminoacylated tmRNA acts like a tRNA, entering the A-site of stalled ribosomes, displacing the stalled mRNA. The ribosome then switches to translate the ORF on the tmRNA; the nascent peptide is terminated with the 'tag peptide' encoded by the tmRNA and targeted for degradation. The ribosome is freed to recommence translation, which seems to be the essential function of trans-translation. In Nostoc punctiforme (strain ATCC 29133 / PCC 73102), this protein is SsrA-binding protein.